The primary structure comprises 149 residues: uncharacterized protein (149 aa).

The HotDog ACOT-type domain maps to 16–128 (PAGEPAIRVI…LFTFVAIDED (113 aa)).

It belongs to the acyl coenzyme A hydrolase family.

This is an uncharacterized protein from Zymomonas mobilis subsp. mobilis (strain ATCC 31821 / ZM4 / CP4).